The following is a 59-amino-acid chain: Protein translocase subunit SecE (59 aa).

Residues 37–57 (GIGIIIIGVIGFIISIIAQLL) traverse the membrane as a helical segment.

This sequence belongs to the SecE/SEC61-gamma family. As to quaternary structure, component of the Sec protein translocase complex. Heterotrimer consisting of SecY (alpha), SecG (beta) and SecE (gamma) subunits. The heterotrimers can form oligomers, although 1 heterotrimer is thought to be able to translocate proteins. Interacts with the ribosome. May interact with SecDF, and other proteins may be involved.

The protein resides in the cell membrane. Its function is as follows. Essential subunit of the Sec protein translocation channel SecYEG. Clamps together the 2 halves of SecY. May contact the channel plug during translocation. In Methanothermobacter thermautotrophicus (strain ATCC 29096 / DSM 1053 / JCM 10044 / NBRC 100330 / Delta H) (Methanobacterium thermoautotrophicum), this protein is Protein translocase subunit SecE.